The following is a 130-amino-acid chain: Putative F-box protein At1g77880 (130 aa).

The 47-residue stretch at 18–64 (KVSIPYLPDDLLLNCLARISRLYYPTLSLVSKRFRSLLASTELYETR) folds into the F-box domain.

This Arabidopsis thaliana (Mouse-ear cress) protein is Putative F-box protein At1g77880.